The primary structure comprises 178 residues: Large ribosomal subunit protein uL6 (178 aa).

Belongs to the universal ribosomal protein uL6 family. Part of the 50S ribosomal subunit.

In terms of biological role, this protein binds to the 23S rRNA, and is important in its secondary structure. It is located near the subunit interface in the base of the L7/L12 stalk, and near the tRNA binding site of the peptidyltransferase center. The polypeptide is Large ribosomal subunit protein uL6 (Aliarcobacter butzleri (strain RM4018) (Arcobacter butzleri)).